A 425-amino-acid polypeptide reads, in one-letter code: UDP-N-acetylglucosamine 1-carboxyvinyltransferase (425 aa).

22–23 provides a ligand contact to phosphoenolpyruvate; that stretch reads KN. R93 is a UDP-N-acetyl-alpha-D-glucosamine binding site. The active-site Proton donor is the C117. 2-(S-cysteinyl)pyruvic acid O-phosphothioketal is present on C117. UDP-N-acetyl-alpha-D-glucosamine-binding positions include 122-126, D307, and V329; that span reads RPIDL.

It belongs to the EPSP synthase family. MurA subfamily.

The protein resides in the cytoplasm. It carries out the reaction phosphoenolpyruvate + UDP-N-acetyl-alpha-D-glucosamine = UDP-N-acetyl-3-O-(1-carboxyvinyl)-alpha-D-glucosamine + phosphate. Its pathway is cell wall biogenesis; peptidoglycan biosynthesis. In terms of biological role, cell wall formation. Adds enolpyruvyl to UDP-N-acetylglucosamine. In Prosthecochloris aestuarii (strain DSM 271 / SK 413), this protein is UDP-N-acetylglucosamine 1-carboxyvinyltransferase.